We begin with the raw amino-acid sequence, 379 residues long: Sialidase-2 (379 aa).

Positions 20–23 (YRIP) match the FRIP motif motif. The substrate site is built by Arg21 and Arg41. Residue Asp46 is the Proton acceptor of the active site. The stretch at 127 to 138 (VTSTDYGMNWSP) is one BNR 1 repeat. Tyr179 and Tyr181 together coordinate substrate. The stretch at 197 to 208 (FISLDHGHTWEL) is one BNR 2 repeat. Substrate is bound by residues Glu218, Arg237, and Arg303. Tyr333 serves as the catalytic Nucleophile. Residue Glu354 is part of the active site.

Belongs to the glycosyl hydrolase 33 family. Detected in skeletal muscle.

It localises to the cytoplasm. The protein localises to the cytosol. It carries out the reaction Hydrolysis of alpha-(2-&gt;3)-, alpha-(2-&gt;6)-, alpha-(2-&gt;8)- glycosidic linkages of terminal sialic acid residues in oligosaccharides, glycoproteins, glycolipids, colominic acid and synthetic substrates.. It catalyses the reaction a ganglioside GD1a + H2O = a ganglioside GM1 + N-acetylneuraminate. The catalysed reaction is a ganglioside GM1 + H2O = a ganglioside GA1 + N-acetylneuraminate. The enzyme catalyses a ganglioside GT1b + H2O = a ganglioside GD1b + N-acetylneuraminate. It carries out the reaction a ganglioside GD1b + H2O = a ganglioside GM1 + N-acetylneuraminate. It catalyses the reaction a ganglioside GD3 + H2O = a ganglioside GM3 + N-acetylneuraminate. The catalysed reaction is a ganglioside GM3 + H2O = a beta-D-galactosyl-(1-&gt;4)-beta-D-glucosyl-(1&lt;-&gt;1)-ceramide + N-acetylneuraminate. The enzyme catalyses a ganglioside GM2 + H2O = a ganglioside GA2 + N-acetylneuraminate. It carries out the reaction a neolactoside IV(3)-alpha-NeuAc-nLc4Cer(d18:1(4E)) + H2O = a neolactoside nLc4Cer(d18:1(4E)) + N-acetylneuraminate. It catalyses the reaction N-acetyl-alpha-neuraminosyl-(2-&gt;3)-beta-D-galactosyl-(1-&gt;4)-D-glucose + H2O = lactose + N-acetylneuraminate. Functionally, exo-alpha-sialidase that catalyzes the hydrolytic cleavage of the terminal sialic acid (N-acetylneuraminic acid, Neu5Ac) of a glycan moiety in the catabolism of glycolipids, glycoproteins and oligosacharides. Recognizes sialyl linkage positions of the glycan moiety as well as the supramolecular organization of the sialoglycoconjugate. Displays preference for alpha-(2-&gt;3)-sialylated GD1a and GT1B gangliosides over alpha-(2-&gt;8)-sialylated GD1b, in both monomeric forms and micelles. Hydrolyzes monomeric GM1 ganglioside, but has no activity toward the miscellar form. Has lower sialidase activity for glycoproteins such as fetuin and TF/transferrin that carry a mixture of alpha-(2-&gt;3) and alpha-(2-&gt;6)-sialyl linkages. Cleaves milk oligosaccharide alpha-(2-&gt;3)-sialyllactose, but is inactive toward alpha-(2-&gt;6)-sialyllactose isomer. Has no activity toward colominic acid, a homomer of alpha-(2-&gt;8)-linked Neu5Ac residues. This Rattus norvegicus (Rat) protein is Sialidase-2 (Neu2).